The sequence spans 89 residues: MRQLPAGPSSLACSGCKAGRLVTVPFSSRDAEDQGSREGIGWQPPGRSWAHTTEQEGKHQVAKATVHPPGPDALLLNQVDPVQCCPTRL.

The segment at 27–57 (SSRDAEDQGSREGIGWQPPGRSWAHTTEQEG) is disordered.

As to expression, isoform 1 or isoform 4 (T+ forms) are expressed at equal levels with isoform 2 or isoform 3 (T- forms) in brain.

Unknown for isoform 4. Csen is involved in calcium-dependent transcriptional repression, regulation of potassium channels, and perhaps in processing of PSEN2 and apoptosis. In Mus musculus (Mouse), this protein is Calsenilin isoform 4 (Kcnip3).